The sequence spans 438 residues: DNA primase DnaG (438 aa).

Residues 169 to 243 (DSIIVVEGRA…DIDYVARAPY (75 aa)) enclose the Toprim domain. Mg(2+) contacts are provided by Glu175, Asp217, and Asp219.

This sequence belongs to the archaeal DnaG primase family. As to quaternary structure, forms a ternary complex with MCM helicase and DNA. It depends on Mg(2+) as a cofactor.

The catalysed reaction is ssDNA + n NTP = ssDNA/pppN(pN)n-1 hybrid + (n-1) diphosphate.. Functionally, RNA polymerase that catalyzes the synthesis of short RNA molecules used as primers for DNA polymerase during DNA replication. The chain is DNA primase DnaG from Methanococcus maripaludis (strain C6 / ATCC BAA-1332).